The chain runs to 356 residues: Alanine racemase (356 aa).

K35 functions as the Proton acceptor; specific for D-alanine in the catalytic mechanism. K35 carries the post-translational modification N6-(pyridoxal phosphate)lysine. Position 130 (R130) interacts with substrate. The active-site Proton acceptor; specific for L-alanine is the Y253. M301 is a binding site for substrate.

Belongs to the alanine racemase family. Pyridoxal 5'-phosphate is required as a cofactor.

It catalyses the reaction L-alanine = D-alanine. The protein operates within amino-acid biosynthesis; D-alanine biosynthesis; D-alanine from L-alanine: step 1/1. Its function is as follows. Catalyzes the interconversion of L-alanine and D-alanine. May also act on other amino acids. The chain is Alanine racemase (alr) from Erwinia tasmaniensis (strain DSM 17950 / CFBP 7177 / CIP 109463 / NCPPB 4357 / Et1/99).